The sequence spans 389 residues: Probable acyl-CoA dehydrogenase fadE25 (389 aa).

This sequence belongs to the acyl-CoA dehydrogenase family. FAD serves as cofactor.

The enzyme catalyses a 2,3-saturated acyl-CoA + A = a 2,3-dehydroacyl-CoA + AH2. The chain is Probable acyl-CoA dehydrogenase fadE25 (fadE25) from Mycobacterium leprae (strain TN).